The primary structure comprises 70 residues: Small ribosomal subunit protein bS21B (70 aa).

The disordered stretch occupies residues 37-70; sequence SYEKPTTERKRKKAAAVARLRKQVRRSMPPKKKY. Basic residues predominate over residues 45–70; the sequence is RKRKKAAAVARLRKQVRRSMPPKKKY.

The protein belongs to the bacterial ribosomal protein bS21 family.

This Burkholderia pseudomallei (strain K96243) protein is Small ribosomal subunit protein bS21B.